Here is a 125-residue protein sequence, read N- to C-terminus: Fluoride-specific ion channel FluC (125 aa).

4 helical membrane-spanning segments follow: residues 4 to 24 (WLFVAAGGAIGACLRFGISEL), 35 to 55 (YGTLVVNVVGSFIMGIAFALI), 69 to 89 (LMVGILGALTTFSSFALDTVV), and 103 to 123 (MGLNLSLCLAMVLLGMQLVAS). Positions 75 and 78 each coordinate Na(+).

Belongs to the fluoride channel Fluc/FEX (TC 1.A.43) family.

The protein resides in the cell inner membrane. The catalysed reaction is fluoride(in) = fluoride(out). With respect to regulation, na(+) is not transported, but it plays an essential structural role and its presence is essential for fluoride channel function. Functionally, fluoride-specific ion channel. Important for reducing fluoride concentration in the cell, thus reducing its toxicity. The protein is Fluoride-specific ion channel FluC of Aeromonas salmonicida (strain A449).